The sequence spans 239 residues: Peptidyl-tRNA hydrolase (239 aa).

TRNA is bound at residue tyrosine 14. The active-site Proton acceptor is histidine 19. Residues phenylalanine 64, asparagine 66, and asparagine 112 each contribute to the tRNA site. The segment at 188-225 (GGKPDAEEPQAPKKQVGQSHIHKARNAAQPKKLPATGP) is disordered.

It belongs to the PTH family. Monomer.

The protein localises to the cytoplasm. The enzyme catalyses an N-acyl-L-alpha-aminoacyl-tRNA + H2O = an N-acyl-L-amino acid + a tRNA + H(+). Functionally, hydrolyzes ribosome-free peptidyl-tRNAs (with 1 or more amino acids incorporated), which drop off the ribosome during protein synthesis, or as a result of ribosome stalling. Catalyzes the release of premature peptidyl moieties from peptidyl-tRNA molecules trapped in stalled 50S ribosomal subunits, and thus maintains levels of free tRNAs and 50S ribosomes. This Sinorhizobium fredii (strain NBRC 101917 / NGR234) protein is Peptidyl-tRNA hydrolase.